A 482-amino-acid polypeptide reads, in one-letter code: MPTATNVENGRITQVIGPVVDVEFPPGTLPDIYTALKVTNPGVDERQDNLVIEVAQHLGENTARCIAMDSTEGLVRGMPVKNTGAPISVPVGQEVLGRILNVVGEPVDERGPVAATKTLPIHRSAPLLTDLNVKVESFETGIKVIDLLAPYLRGGKIGLFGGAGVGKTVLLMELVNNVAKKRGGFSVFGGVGERTREGNDLYHEMIEAGVINKDDLSKSQCVLVYGQMNEPPGARARVALSALTVAEYFRDVENRDMLLFIDNIFRFTQAGSEVSALLGRIPSAVGYQPTLSTEMGELQERITSTQKGAITSVQAIYVPADDLTDPAPATAFAHLDATTVLNRKLTEIGIYPAVDPLDSTSRILDPNVVGKEHYAVARAVQETLQRYKDLQDIIAILGMDELSEDDKLTVARARKIQRFLSQPFTVAQQFTGNPGKYVELPDTIRGFKEIVDGKHDDLPEQAFYMVGGIEEAVEKAKKLTAG.

161–168 (GGAGVGKT) contacts ATP.

This sequence belongs to the ATPase alpha/beta chains family. As to quaternary structure, F-type ATPases have 2 components, CF(1) - the catalytic core - and CF(0) - the membrane proton channel. CF(1) has five subunits: alpha(3), beta(3), gamma(1), delta(1), epsilon(1). CF(0) has three main subunits: a(1), b(2) and c(9-12). The alpha and beta chains form an alternating ring which encloses part of the gamma chain. CF(1) is attached to CF(0) by a central stalk formed by the gamma and epsilon chains, while a peripheral stalk is formed by the delta and b chains.

The protein localises to the cell inner membrane. It carries out the reaction ATP + H2O + 4 H(+)(in) = ADP + phosphate + 5 H(+)(out). Functionally, produces ATP from ADP in the presence of a proton gradient across the membrane. The catalytic sites are hosted primarily by the beta subunits. In Anaeromyxobacter dehalogenans (strain 2CP-C), this protein is ATP synthase subunit beta.